Reading from the N-terminus, the 563-residue chain is Calmodulin-binding protein 60 G (563 aa).

Positions 1 to 76 (MKIRNSPSFH…SSCVSMERSR (76 aa)) are calmodulin-binding. The tract at residues 147 to 263 (ESWTVEGFNR…VSATRLAERK (117 aa)) is DNA-binding.

This sequence belongs to the plant ACBP60 protein family. In terms of assembly, interacts with calmodulin (CaM) in the presence of calcium ions; this interaction is required for defense responses. (Microbial infection) Interacts with V.dahliae SCP41; the interaction is direct and inhibits CBP60G. As to expression, expressed in seedlings, roots, leaves, inflorescences and flowers, and, to a lower extent, in siliques. Particularly present in guard cells.

It is found in the nucleus. In terms of biological role, transcription activator that binds DNA in a sequence-specific manner, 5'-GAAATTTTGG-3', to promote the expression of target genes. Recruited to the promoter of ICS1 and other defense-related genes (e.g. PR1, PR2 and EDS5) in response to both biotic (e.g. Pseudomonas syringae pv. maculicola ES4326, P.syringae pv. tomato DC3000, and microbe-associated molecular patterns (MAMPs) such as flg22) and abiotic stresses (e.g. UV-B, drought and abscisic acid), thus triggering rapid defense responses by stimulating salicylic acid (SA) biosynthesis. Involved in basal and systemic acquired resistance to P.syringae and Hyaloperonospora arabidopsidis. Mediates resistance to drought and sensitivity to abscisic acid (ABA), especially for ABA-mediated signaling process that regulates early seedling growth. This Arabidopsis thaliana (Mouse-ear cress) protein is Calmodulin-binding protein 60 G.